The primary structure comprises 155 residues: Cardioactive peptide (155 aa).

The N-terminal stretch at 1–23 (MRTSMRISLRLLALLACAICSQA) is a signal peptide. Residues 24–49 (SLERENNEGTNMANHKLSGVIQWKYE) constitute a propeptide that is removed on maturation. A disulfide bridge connects residues Cys54 and Cys60. Cys60 carries the cysteine amide modification. Residues 64–155 (RTYPSYPPFS…MQQLEERESK (92 aa)) constitute a propeptide that is removed on maturation. Positions 135–155 (NKQKMLQNEKEMQQLEERESK) are disordered. The span at 141–155 (QNEKEMQQLEERESK) shows a compositional bias: basic and acidic residues.

In terms of tissue distribution, central nervous system; most neurons exhibit coexpression with Burs.

It localises to the secreted. Its function is as follows. Cardioregulatory neurohormone that increases heart beat rate during adult wing inflation; has no effect on beat amplitude. The effect of CCAP is both ino- and chronotropic. The protein is Cardioactive peptide of Drosophila melanogaster (Fruit fly).